A 506-amino-acid polypeptide reads, in one-letter code: Voltage-gated potassium channel regulatory subunit KCNG4 (506 aa).

Over 1–216 (MPMSSRDRDL…EMVEDPQSGL (216 aa)) the chain is Cytoplasmic. Residues 217 to 238 (PGKVFACLSVLFVATTAVSLCV) form a helical membrane-spanning segment. Over 239 to 259 (STMPDFRAEEGKGECTRKCYY) the chain is Extracellular. A helical membrane pass occupies residues 260-281 (IFVVESICVAWFSLEFCLRFVQ). At 282 to 292 (APNKCQFFRGP) the chain is on the cytoplasmic side. A helical transmembrane segment spans residues 293-312 (LNVIDILAISPYYVSLAVSD). Topologically, residues 313 to 326 (ESPEAGERPSSSSY) are extracellular. The helical; Voltage-sensor transmembrane segment at 327–351 (LEKVGLVLRVLRALRILYVMRLARH) threads the bilayer. The Cytoplasmic segment spans residues 352–366 (SLGLQTLGLTVRRCA). A helical transmembrane segment spans residues 367-388 (REFGLLMLFLAVAVTLFSPLVY). At 389–403 (VAENESGRVLEFTSI) the chain is on the extracellular side. An intramembrane region (helical) is located at residues 404–415 (PASYWWAIISMT). The Selectivity filter signature appears at 416–421 (TVGYGD). An intramembrane segment occupies 416–423 (TVGYGDMV). At 424–430 (PRSVPGQ) the chain is on the extracellular side. The helical transmembrane segment at 431–459 (MVALSSILSGILIMAFPATSIFHTFSHSY) threads the bilayer. The Cytoplasmic segment spans residues 460–506 (LELKREQEQVQARLRRLQNTNSASERELLSDVDDLVPEGLTSPGRYM).

This sequence belongs to the potassium channel family. G (TC 1.A.1.2) subfamily. Kv6.4/KCNG4 sub-subfamily. Heterotetramer with KCNB1. Does not form homomultimer.

Its subcellular location is the cell membrane. In terms of biological role, regulatory subunit of the voltage-gated potassium (Kv) channel which, when coassembled with KCNB1, modulates the kinetics parameters of the heterotetrameric channel namely the time course of activation, deactivation and inactivation and on the voltage-dependence of activation. Potassium channel subunit that does not form functional channels by itself. Reduces the deactivation rate. Modulates the threshold for activation by shifting by approximately 20 mV in hyperpolarizing direction. Markedly changes the inactivation by shifting the voltage dependence of inactivation by approximately 40 mV in hyperpolarizing direction. Acceleratee activation and enhances the time course of activation. The protein is Voltage-gated potassium channel regulatory subunit KCNG4 of Mus musculus (Mouse).